We begin with the raw amino-acid sequence, 416 residues long: 3-phosphoshikimate 1-carboxyvinyltransferase (416 aa).

Residues K20, S21, and R25 each coordinate 3-phosphoshikimate. K20 contacts phosphoenolpyruvate. Residues G88 and R116 each contribute to the phosphoenolpyruvate site. 3-phosphoshikimate is bound by residues S159, S160, Q161, S186, D300, and K327. Q161 contributes to the phosphoenolpyruvate binding site. D300 acts as the Proton acceptor in catalysis. Residues R331 and R373 each contribute to the phosphoenolpyruvate site.

It belongs to the EPSP synthase family. Monomer.

The protein localises to the cytoplasm. It carries out the reaction 3-phosphoshikimate + phosphoenolpyruvate = 5-O-(1-carboxyvinyl)-3-phosphoshikimate + phosphate. The protein operates within metabolic intermediate biosynthesis; chorismate biosynthesis. Catalyzes the transfer of the enolpyruvyl moiety of phosphoenolpyruvate (PEP) to the 5-hydroxyl of shikimate-3-phosphate (S3P) to produce enolpyruvyl shikimate-3-phosphate and inorganic phosphate. The sequence is that of 3-phosphoshikimate 1-carboxyvinyltransferase from Archaeoglobus fulgidus (strain ATCC 49558 / DSM 4304 / JCM 9628 / NBRC 100126 / VC-16).